We begin with the raw amino-acid sequence, 129 residues long: M-zodatoxin-Lt8j (129 aa).

A signal peptide spans 1 to 20 (MKYFVVALALVAAFACIAES). Positions 21–60 (KPAESEHELAEVEEENELADLEDAVWLEHLADLSDLEEAR) are excised as a propeptide.

Belongs to the cationic peptide 06 (cytoinsectotoxin) family. In terms of tissue distribution, expressed by the venom gland.

The protein localises to the secreted. In terms of biological role, insecticidal, cytolytic and antimicrobial peptide. Forms voltage-dependent, ion-permeable channels in membranes. At high concentration causes cell membrane lysis. This is M-zodatoxin-Lt8j (cit 1-9) from Lachesana tarabaevi (Spider).